A 341-amino-acid polypeptide reads, in one-letter code: Thymidine kinase (341 aa).

G19–T26 serves as a coordination point for ATP. The active-site Proton acceptor is the E48. Substrate-binding residues include Y66 and Q90. R183 is an ATP binding site. Residue R189 coordinates substrate.

The protein belongs to the herpesviridae thymidine kinase family. In terms of assembly, homodimer.

The catalysed reaction is thymidine + ATP = dTMP + ADP + H(+). Its function is as follows. Catalyzes the transfer of the gamma-phospho group of ATP to thymidine to generate dTMP in the salvage pathway of pyrimidine synthesis. The dTMP serves as a substrate for DNA polymerase during viral DNA replication. Allows the virus to be reactivated and to grow in non-proliferative cells lacking a high concentration of phosphorylated nucleic acid precursors. The sequence is that of Thymidine kinase from Varicella-zoster virus (strain Dumas) (HHV-3).